A 500-amino-acid polypeptide reads, in one-letter code: Probable cytosol aminopeptidase (500 aa).

Residues lysine 264 and aspartate 269 each contribute to the Mn(2+) site. Residue lysine 276 is part of the active site. Positions 287, 346, and 348 each coordinate Mn(2+). Arginine 350 is an active-site residue.

The protein belongs to the peptidase M17 family. Mn(2+) is required as a cofactor.

It is found in the cytoplasm. The catalysed reaction is Release of an N-terminal amino acid, Xaa-|-Yaa-, in which Xaa is preferably Leu, but may be other amino acids including Pro although not Arg or Lys, and Yaa may be Pro. Amino acid amides and methyl esters are also readily hydrolyzed, but rates on arylamides are exceedingly low.. It catalyses the reaction Release of an N-terminal amino acid, preferentially leucine, but not glutamic or aspartic acids.. In terms of biological role, presumably involved in the processing and regular turnover of intracellular proteins. Catalyzes the removal of unsubstituted N-terminal amino acids from various peptides. In Rhodopseudomonas palustris (strain BisB5), this protein is Probable cytosol aminopeptidase.